Here is a 162-residue protein sequence, read N- to C-terminus: Ribonuclease H (162 aa).

The RNase H type-1 domain maps to 6–154; it reads DMKRVEIFTD…ADRLANQGVE (149 aa). 4 residues coordinate Mg(2+): D15, E53, D82, and D146.

The protein belongs to the RNase H family. As to quaternary structure, monomer. Mg(2+) is required as a cofactor.

The protein resides in the cytoplasm. The enzyme catalyses Endonucleolytic cleavage to 5'-phosphomonoester.. In terms of biological role, endonuclease that specifically degrades the RNA of RNA-DNA hybrids. This Nitrosomonas eutropha (strain DSM 101675 / C91 / Nm57) protein is Ribonuclease H.